A 352-amino-acid chain; its full sequence is Cyclin-dependent kinase-like 1 (352 aa).

Positions 4 to 287 (YEKIGKIGEG…CEQLLQHPYF (284 aa)) constitute a Protein kinase domain. ATP-binding positions include 10-18 (IGEGSYGVV) and lysine 33. Positions 45 to 51 (KKIALRE) match the [NKR]KIAxRE motif. Aspartate 126 functions as the Proton acceptor in the catalytic mechanism.

The protein belongs to the protein kinase superfamily. CMGC Ser/Thr protein kinase family. CDC2/CDKX subfamily.

Its subcellular location is the cytoplasm. The protein localises to the nucleus. It catalyses the reaction L-seryl-[protein] + ATP = O-phospho-L-seryl-[protein] + ADP + H(+). It carries out the reaction L-threonyl-[protein] + ATP = O-phospho-L-threonyl-[protein] + ADP + H(+). The chain is Cyclin-dependent kinase-like 1 from Mus musculus (Mouse).